The chain runs to 343 residues: NADH dehydrogenase [ubiquinone] 1 alpha subcomplex subunit 10, mitochondrial (343 aa).

The transit peptide at 1 to 23 (MALRLLRLVPPRVGGIHTSVQFK) directs the protein to the mitochondrion. Lys110 carries the post-translational modification N6-acetyllysine; alternate. At Lys110 the chain carries N6-succinyllysine; alternate. Ser238 carries the post-translational modification Phosphoserine; by PINK1.

This sequence belongs to the complex I NDUFA10 subunit family. In terms of assembly, complex I is composed of 45 different subunits. This a component of the hydrophobic protein fraction. It depends on FAD as a cofactor. Post-translationally, phosphorylation at Ser-238 by PINK1 is required for the binding and/or reduction of the complex I substrate ubiquinone.

The protein localises to the mitochondrion matrix. Its function is as follows. Accessory subunit of the mitochondrial membrane respiratory chain NADH dehydrogenase (Complex I), that is believed not to be involved in catalysis. Complex I functions in the transfer of electrons from NADH to the respiratory chain. The immediate electron acceptor for the enzyme is believed to be ubiquinone. In Bos taurus (Bovine), this protein is NADH dehydrogenase [ubiquinone] 1 alpha subcomplex subunit 10, mitochondrial (NDUFA10).